Here is a 600-residue protein sequence, read N- to C-terminus: FERM domain-containing protein 3 (600 aa).

In terms of domain architecture, FERM spans 31–311 (MRCTIRLLDD…ENQAFYKYAK (281 aa)). The interval 413-440 (SAPVLGNSPARGLETTADVTHDEEESIR) is disordered. The helical transmembrane segment at 534–554 (LLLAAIGLLMVVLPLLLILLE) threads the bilayer.

It is found in the membrane. This is FERM domain-containing protein 3 (frmd3) from Xenopus tropicalis (Western clawed frog).